The primary structure comprises 729 residues: Polyribonucleotide nucleotidyltransferase (729 aa).

Mg(2+)-binding residues include Asp-516 and Asp-522. The region spanning 581-641 (PSTEHFSINP…EKVAAAKEHI (61 aa)) is the KH domain. One can recognise an S1 motif domain in the interval 658–725 (GKTYVGKVKK…KGKKVELATP (68 aa)).

This sequence belongs to the polyribonucleotide nucleotidyltransferase family. Requires Mg(2+) as cofactor.

The protein resides in the cytoplasm. It carries out the reaction RNA(n+1) + phosphate = RNA(n) + a ribonucleoside 5'-diphosphate. Involved in mRNA degradation. Catalyzes the phosphorolysis of single-stranded polyribonucleotides processively in the 3'- to 5'-direction. In Sulfurovum sp. (strain NBC37-1), this protein is Polyribonucleotide nucleotidyltransferase.